Here is a 218-residue protein sequence, read N- to C-terminus: Probable transaldolase (218 aa).

The active-site Schiff-base intermediate with substrate is K87.

It belongs to the transaldolase family. Type 3B subfamily.

It localises to the cytoplasm. The enzyme catalyses D-sedoheptulose 7-phosphate + D-glyceraldehyde 3-phosphate = D-erythrose 4-phosphate + beta-D-fructose 6-phosphate. It functions in the pathway carbohydrate degradation; pentose phosphate pathway; D-glyceraldehyde 3-phosphate and beta-D-fructose 6-phosphate from D-ribose 5-phosphate and D-xylulose 5-phosphate (non-oxidative stage): step 2/3. Functionally, transaldolase is important for the balance of metabolites in the pentose-phosphate pathway. The polypeptide is Probable transaldolase (Bacteroides fragilis (strain YCH46)).